The sequence spans 292 residues: MPKAFQTIGLIGKPNHHGTNLTLKRLHHWLTMQGFEILVEERVAAEMGPKCNSVDLLELGDRCDLAIVVGGDGNMLGAARVLARFDIGVIGVNRGNLGFLTDLPPDSFEAALGDVLEGKFETEFRFLLETEVHRHGNMKSSNTAVNEAVLHPGKVAHMIEFEVYIDNNFMYSQRADGMIVSTPTGSTAYSLSAGGAILTPNLEALILVPMFPHTLSSRPIVVDACSIIKLVVSPENGDNLEVSCDGHVMLPVLPGDEIIIKRSHERLRLIHPKGHNYFHVLRNKLGWGSKLF.

The Proton acceptor role is filled by D72. Residues 72 to 73 (DG), 146 to 147 (NE), H157, R174, D176, and 187 to 192 (TAYSLS) each bind NAD(+).

Belongs to the NAD kinase family. The cofactor is a divalent metal cation.

The protein resides in the cytoplasm. The catalysed reaction is NAD(+) + ATP = ADP + NADP(+) + H(+). In terms of biological role, involved in the regulation of the intracellular balance of NAD and NADP, and is a key enzyme in the biosynthesis of NADP. Catalyzes specifically the phosphorylation on 2'-hydroxyl of the adenosine moiety of NAD to yield NADP. This Shewanella woodyi (strain ATCC 51908 / MS32) protein is NAD kinase.